We begin with the raw amino-acid sequence, 231 residues long: 7-cyano-7-deazaguanine synthase (231 aa).

8–18 (FSGGQDSTTCL) is an ATP binding site. 4 residues coordinate Zn(2+): Cys-188, Cys-197, Cys-200, and Cys-203.

The protein belongs to the QueC family. It depends on Zn(2+) as a cofactor.

It carries out the reaction 7-carboxy-7-deazaguanine + NH4(+) + ATP = 7-cyano-7-deazaguanine + ADP + phosphate + H2O + H(+). It participates in purine metabolism; 7-cyano-7-deazaguanine biosynthesis. Catalyzes the ATP-dependent conversion of 7-carboxy-7-deazaguanine (CDG) to 7-cyano-7-deazaguanine (preQ(0)). This is 7-cyano-7-deazaguanine synthase from Escherichia coli O127:H6 (strain E2348/69 / EPEC).